The chain runs to 324 residues: Fibronectin type III domain-containing protein 8 (324 aa).

In terms of domain architecture, Fibronectin type-III spans 179-280; the sequence is PDTPFIFEHT…KPYKFATLAT (102 aa).

The protein is Fibronectin type III domain-containing protein 8 (FNDC8) of Homo sapiens (Human).